We begin with the raw amino-acid sequence, 248 residues long: Indole-3-glycerol phosphate synthase (248 aa).

The protein belongs to the TrpC family.

The catalysed reaction is 1-(2-carboxyphenylamino)-1-deoxy-D-ribulose 5-phosphate + H(+) = (1S,2R)-1-C-(indol-3-yl)glycerol 3-phosphate + CO2 + H2O. It participates in amino-acid biosynthesis; L-tryptophan biosynthesis; L-tryptophan from chorismate: step 4/5. The chain is Indole-3-glycerol phosphate synthase from Sulfolobus acidocaldarius (strain ATCC 33909 / DSM 639 / JCM 8929 / NBRC 15157 / NCIMB 11770).